The primary structure comprises 301 residues: Amylovoran biosynthesis glycosyltransferase AmsB (301 aa).

This sequence belongs to the glycosyltransferase 2 family.

It functions in the pathway glycan metabolism; exopolysaccharide biosynthesis. Functionally, involved in the biosynthesis of amylovoran, which functions as a virulence factor. May function as a glycosyl transferase which transfers galactose from UDP-galactose to a lipid-linked amylovoran-subunit precursor. In Erwinia amylovora (Fire blight bacteria), this protein is Amylovoran biosynthesis glycosyltransferase AmsB (amsB).